The following is a 97-amino-acid chain: Large ribosomal subunit protein eL21 (97 aa).

This sequence belongs to the eukaryotic ribosomal protein eL21 family.

The polypeptide is Large ribosomal subunit protein eL21 (Methanococcus aeolicus (strain ATCC BAA-1280 / DSM 17508 / OCM 812 / Nankai-3)).